The chain runs to 269 residues: Mitochondrial acidic protein mam33 (269 aa).

The protein belongs to the MAM33 family.

The protein localises to the cytoplasm. It is found in the mitochondrion matrix. The protein is Mitochondrial acidic protein mam33 of Schizosaccharomyces pombe (strain 972 / ATCC 24843) (Fission yeast).